A 336-amino-acid polypeptide reads, in one-letter code: Phosphate acyltransferase (336 aa).

It belongs to the PlsX family. Homodimer. Probably interacts with PlsY.

Its subcellular location is the cytoplasm. It carries out the reaction a fatty acyl-[ACP] + phosphate = an acyl phosphate + holo-[ACP]. It participates in lipid metabolism; phospholipid metabolism. In terms of biological role, catalyzes the reversible formation of acyl-phosphate (acyl-PO(4)) from acyl-[acyl-carrier-protein] (acyl-ACP). This enzyme utilizes acyl-ACP as fatty acyl donor, but not acyl-CoA. The chain is Phosphate acyltransferase from Pseudomonas putida (strain ATCC 47054 / DSM 6125 / CFBP 8728 / NCIMB 11950 / KT2440).